An 85-amino-acid polypeptide reads, in one-letter code: Large ribosomal subunit protein bL27 (85 aa).

A compositionally biased stretch (gly residues) spans methionine 1–threonine 10. A disordered region spans residues methionine 1–methionine 20.

This sequence belongs to the bacterial ribosomal protein bL27 family.

The sequence is that of Large ribosomal subunit protein bL27 from Acidovorax ebreus (strain TPSY) (Diaphorobacter sp. (strain TPSY)).